We begin with the raw amino-acid sequence, 395 residues long: 1-deoxy-D-xylulose 5-phosphate reductoisomerase (395 aa).

Residues Thr10, Gly11, Ser12, Ile13, and Asn123 each contribute to the NADPH site. Lys124 provides a ligand contact to 1-deoxy-D-xylulose 5-phosphate. Glu125 lines the NADPH pocket. Asp149 contacts Mn(2+). Ser150, Glu151, Ser185, and His208 together coordinate 1-deoxy-D-xylulose 5-phosphate. Glu151 is a Mn(2+) binding site. Position 214 (Gly214) interacts with NADPH. 1-deoxy-D-xylulose 5-phosphate is bound by residues Ser221, Asn226, Lys227, and Glu230. Glu230 is a Mn(2+) binding site.

It belongs to the DXR family. Requires Mg(2+) as cofactor. It depends on Mn(2+) as a cofactor.

It catalyses the reaction 2-C-methyl-D-erythritol 4-phosphate + NADP(+) = 1-deoxy-D-xylulose 5-phosphate + NADPH + H(+). Its pathway is isoprenoid biosynthesis; isopentenyl diphosphate biosynthesis via DXP pathway; isopentenyl diphosphate from 1-deoxy-D-xylulose 5-phosphate: step 1/6. In terms of biological role, catalyzes the NADPH-dependent rearrangement and reduction of 1-deoxy-D-xylulose-5-phosphate (DXP) to 2-C-methyl-D-erythritol 4-phosphate (MEP). The chain is 1-deoxy-D-xylulose 5-phosphate reductoisomerase from Shewanella sediminis (strain HAW-EB3).